The primary structure comprises 892 residues: Alanine--tRNA ligase (892 aa).

Zn(2+) is bound by residues histidine 596, histidine 600, cysteine 700, and histidine 704.

The protein belongs to the class-II aminoacyl-tRNA synthetase family. Requires Zn(2+) as cofactor.

The protein resides in the cytoplasm. It carries out the reaction tRNA(Ala) + L-alanine + ATP = L-alanyl-tRNA(Ala) + AMP + diphosphate. Catalyzes the attachment of alanine to tRNA(Ala) in a two-step reaction: alanine is first activated by ATP to form Ala-AMP and then transferred to the acceptor end of tRNA(Ala). Also edits incorrectly charged Ser-tRNA(Ala) and Gly-tRNA(Ala) via its editing domain. This is Alanine--tRNA ligase from Methanococcus maripaludis (strain DSM 14266 / JCM 13030 / NBRC 101832 / S2 / LL).